Reading from the N-terminus, the 338-residue chain is Large ribosomal subunit protein uL10 (338 aa).

Positions 302–338 (IAAQPQPAEEAEEKVEEEEEEEKEEEEALAGLGALFG) are disordered. Residues 310-329 (EEAEEKVEEEEEEEKEEEEA) are compositionally biased toward acidic residues.

The protein belongs to the universal ribosomal protein uL10 family. In terms of assembly, part of the 50S ribosomal subunit. Forms part of the ribosomal stalk which helps the ribosome interact with GTP-bound translation factors. Forms a heptameric L10(L12)2(L12)2(L12)2 complex, where L10 forms an elongated spine to which the L12 dimers bind in a sequential fashion.

In terms of biological role, forms part of the ribosomal stalk, playing a central role in the interaction of the ribosome with GTP-bound translation factors. This is Large ribosomal subunit protein uL10 from Thermococcus sibiricus (strain DSM 12597 / MM 739).